The following is a 638-amino-acid chain: MSQKGKNKKWRSAGLYALLAIVLISLATTFLGNRPPERLEISYSDLISRVERGEVSKVLVETAPDGRQVAIAEAEINNRATQVQVNLPPLTPEFENTLVANGVELAVRPVQEEGLLGRILSTFFLPVLLLLGLFFLLRRAQNGPGSQALNFGKSRARVQMEPKTQITFNDVAGIDQAKLELAEVVDFLKNSERFTALGAKIPRGVLLVGPPGTGKTLLARAVAGEAGVPFFSISGSEFVEMFVGVGASRVRDLFEQAKQNAPCIVFIDEIDAVGRQRGAGLGGGNDEREQTLNQLLTEMDGFEGNSGIIVIAATNRPDVLDAALLRPGRFDRQVTVDRPDFQGRLEILKVHARGKTLSADVDLEKLARRTPGFTGADLANLLNEAAILAARRNLTEISMDEINDAVDRVLAGPEKKDRLMSERRKELVAYHEAGHALVGSLLPNYDPIQKVTIIPRGQAGGLTWFMPSDDDMGLTTRAHLKNMMTVALGGRVAEEVVYGESEITTGAASDLQQVARIARNMVTRFGMSDRLGNVALGRQYANIFLGREIAAERDFSEETAALIDEEVRRLVNEAYQRATYLIRENRALLDRIARRLVEAETIDGEELQAIIDNSEVVMLPPEEEPEPLTLPMAVNAGA.

Topologically, residues 1–11 are cytoplasmic; it reads MSQKGKNKKWR. The helical transmembrane segment at 12-32 threads the bilayer; it reads SAGLYALLAIVLISLATTFLG. Residues 33-114 lie on the Lumenal side of the membrane; sequence NRPPERLEIS…LAVRPVQEEG (82 aa). The helical transmembrane segment at 115–135 threads the bilayer; sequence LLGRILSTFFLPVLLLLGLFF. Topologically, residues 136 to 638 are cytoplasmic; that stretch reads LLRRAQNGPG…TLPMAVNAGA (503 aa). Residue 209-216 coordinates ATP; the sequence is GPPGTGKT. Residue His-431 coordinates Zn(2+). The active site involves Glu-432. Residues His-435 and Asp-510 each coordinate Zn(2+).

The protein in the central section; belongs to the AAA ATPase family. In the C-terminal section; belongs to the peptidase M41 family. In terms of assembly, homohexamer. Zn(2+) serves as cofactor.

It localises to the cellular thylakoid membrane. Functionally, acts as a processive, ATP-dependent zinc metallopeptidase for both cytoplasmic and membrane proteins. Plays a role in the quality control of integral membrane proteins. The protein is ATP-dependent zinc metalloprotease FtsH of Synechococcus sp. (strain JA-2-3B'a(2-13)) (Cyanobacteria bacterium Yellowstone B-Prime).